The primary structure comprises 394 residues: Outer membrane protein S1 (394 aa).

Residues 1–21 (MNRKVLALLVPALLVAGAANA) form the signal peptide. Residues 222 to 242 (SSSDRSDNQVARGYGDGMNER) are disordered.

The protein belongs to the Gram-negative porin family. In terms of assembly, homotrimer.

It localises to the cell outer membrane. In terms of biological role, forms pores that allow passive diffusion of small molecules across the outer membrane. The chain is Outer membrane protein S1 (ompS1) from Salmonella typhi.